The chain runs to 330 residues: Glycerol-3-phosphate dehydrogenase [NAD(P)+] (330 aa).

Residues Ser10, Trp11, Arg31, and Lys104 each coordinate NADPH. Residues Lys104, Gly131, and Ser133 each contribute to the sn-glycerol 3-phosphate site. An NADPH-binding site is contributed by Ala135. Sn-glycerol 3-phosphate is bound by residues Lys186, Asp239, Ser249, Arg250, and Asn251. The Proton acceptor role is filled by Lys186. NADPH is bound at residue Arg250. Positions 274 and 276 each coordinate NADPH.

This sequence belongs to the NAD-dependent glycerol-3-phosphate dehydrogenase family.

It localises to the cytoplasm. The enzyme catalyses sn-glycerol 3-phosphate + NAD(+) = dihydroxyacetone phosphate + NADH + H(+). It carries out the reaction sn-glycerol 3-phosphate + NADP(+) = dihydroxyacetone phosphate + NADPH + H(+). The protein operates within membrane lipid metabolism; glycerophospholipid metabolism. Functionally, catalyzes the reduction of the glycolytic intermediate dihydroxyacetone phosphate (DHAP) to sn-glycerol 3-phosphate (G3P), the key precursor for phospholipid synthesis. The polypeptide is Glycerol-3-phosphate dehydrogenase [NAD(P)+] (Thermoanaerobacter sp. (strain X514)).